Reading from the N-terminus, the 610-residue chain is Chaperone protein DnaK (610 aa).

Residue Thr-173 is modified to Phosphothreonine; by autocatalysis. Disordered stretches follow at residues 525-544 (ENIG…ALKT) and 576-610 (AAQQ…DDKK). A compositionally biased stretch (basic and acidic residues) spans 529-542 (EEDKKSAEEKKDAL). A compositionally biased stretch (low complexity) spans 576–592 (AAQQQQQAQGANAGQNN). A compositionally biased stretch (basic and acidic residues) spans 599 to 610 (AEFKEVKDDDKK).

This sequence belongs to the heat shock protein 70 family.

Acts as a chaperone. The protein is Chaperone protein DnaK of Staphylococcus aureus (strain Mu3 / ATCC 700698).